The sequence spans 404 residues: Subtilisin-like proteinase Mp1 (404 aa).

Residues 1-19 form the signal peptide; it reads MVGFKTLALHLAAVLPALA. The propeptide occupies 20-112; the sequence is APVDKQATQV…VEPDQVWDLY (93 aa). Positions 33 to 111 constitute an Inhibitor I9 domain; it reads SYIITLKQGA…FVEPDQVWDL (79 aa). Residues 121 to 404 form the Peptidase S8 domain; sequence PWGLGSISHR…NLIAFNGVTA (284 aa). An N-linked (GlcNAc...) asparagine glycan is attached at Asn-133. Active-site charge relay system residues include Asp-154, His-186, and Ser-347.

This sequence belongs to the peptidase S8 family.

The protein localises to the secreted. The protein is Subtilisin-like proteinase Mp1 of Magnaporthiopsis poae (Kentucky bluegrass fungus).